Here is a 439-residue protein sequence, read N- to C-terminus: Cell division protein FtsA (439 aa).

It belongs to the FtsA/MreB family. In terms of assembly, self-interacts. Interacts with FtsZ.

It localises to the cell inner membrane. Its function is as follows. Cell division protein that is involved in the assembly of the Z ring. May serve as a membrane anchor for the Z ring. This chain is Cell division protein FtsA, found in Shigella flexneri.